A 137-amino-acid polypeptide reads, in one-letter code: Large ribosomal subunit protein uL16 (137 aa).

It belongs to the universal ribosomal protein uL16 family. In terms of assembly, part of the 50S ribosomal subunit.

Binds 23S rRNA and is also seen to make contacts with the A and possibly P site tRNAs. The sequence is that of Large ribosomal subunit protein uL16 from Bartonella henselae (strain ATCC 49882 / DSM 28221 / CCUG 30454 / Houston 1) (Rochalimaea henselae).